A 228-amino-acid chain; its full sequence is Glucose-induced degradation protein 8 homolog (228 aa).

The region spanning 29–61 (SKSDLNKLVMNYLVIEGYQEAAAKFQEESSTQT) is the LisH domain. Positions 67-124 (SIADRMAIRSAIQCGDVEKGIEIVNDLNPEILDTNPQLYFHLQQQKLIELIRKGMTAE) constitute a CTLH domain.

The protein belongs to the GID8 family.

Its subcellular location is the cytoplasm. It localises to the nucleus. Functionally, core component of the CTLH E3 ubiquitin-protein ligase complex that mediates ubiquitination and subsequent proteasomal degradation of target proteins. Acts as a positive regulator of Wnt signaling pathway by promoting beta-catenin (CTNNB1) nuclear accumulation. In Dictyostelium discoideum (Social amoeba), this protein is Glucose-induced degradation protein 8 homolog.